The following is a 640-amino-acid chain: Threonine--tRNA ligase (640 aa).

Residues 224-525 are catalytic; the sequence is DHRKLGKELD…LTEHYAGAFP (302 aa). Residues cysteine 323, histidine 374, and histidine 502 each contribute to the Zn(2+) site.

It belongs to the class-II aminoacyl-tRNA synthetase family. In terms of assembly, homodimer. Zn(2+) is required as a cofactor.

It localises to the cytoplasm. The enzyme catalyses tRNA(Thr) + L-threonine + ATP = L-threonyl-tRNA(Thr) + AMP + diphosphate + H(+). Its function is as follows. Catalyzes the attachment of threonine to tRNA(Thr) in a two-step reaction: L-threonine is first activated by ATP to form Thr-AMP and then transferred to the acceptor end of tRNA(Thr). Also edits incorrectly charged L-seryl-tRNA(Thr). The chain is Threonine--tRNA ligase from Tropheryma whipplei (strain Twist) (Whipple's bacillus).